Here is a 324-residue protein sequence, read N- to C-terminus: Histidine N-acetyltransferase (324 aa).

The N-acetyltransferase domain maps to 15-151; the sequence is FEFVLAAEKE…GILLLSFNAP (137 aa).

The catalysed reaction is L-histidine + acetyl-CoA = N(alpha)-acetyl-L-histidine + CoA + H(+). In terms of biological role, enzyme responsible for the N-acetyl-histidine (NAH) synthesis, which is a major constituent of brain and lens of ectothermic vertebrates. In Xenopus tropicalis (Western clawed frog), this protein is Histidine N-acetyltransferase (hisat).